The following is a 333-amino-acid chain: Ribosomal RNA large subunit methyltransferase F (333 aa).

Residues 1–10 are compositionally biased toward basic residues; the sequence is MPQPPKRPRK. The tract at residues 1–31 is disordered; sequence MPQPPKRPRKPAPAAVKTAPAKGELHPRNRH. The span at 12 to 22 shows a compositional bias: low complexity; sequence APAAVKTAPAK.

Belongs to the methyltransferase superfamily. METTL16/RlmF family.

It localises to the cytoplasm. The catalysed reaction is adenosine(1618) in 23S rRNA + S-adenosyl-L-methionine = N(6)-methyladenosine(1618) in 23S rRNA + S-adenosyl-L-homocysteine + H(+). Specifically methylates the adenine in position 1618 of 23S rRNA. This chain is Ribosomal RNA large subunit methyltransferase F, found in Ectopseudomonas mendocina (strain ymp) (Pseudomonas mendocina).